The sequence spans 402 residues: TBC1 domain family member 20 (402 aa).

Positions 1-27 are disordered; the sequence is MALRPSKGDGSAGRWDRGAGKADFNAK. The span at 14–26 shows a compositional bias: basic and acidic residues; sequence RWDRGAGKADFNA. The region spanning 59–245 is the Rab-GAP TBC domain; the sequence is LLTDEIRCQV…RLYDFFLACH (187 aa). 2 helical membrane-spanning segments follow: residues 237–257 and 366–386; these read LYDF…AVIV and FVKL…LAVV.

The protein localises to the membrane. Its function is as follows. GTPase-activating protein specific for Rab1 and Rab2 small GTPase families for which it can accelerate the intrinsic GTP hydrolysis rate by more than five orders of magnitude. Also shows GAP activity for RAB18 GTPase. Promotes RAB18 dissociation from the endoplasmic reticulum (ER) membrane into the cytosol, probably through stimulating RAB18 GTP-hydrolysis. Involved in maintaining endoplasmic reticulum structure. In Mus musculus (Mouse), this protein is TBC1 domain family member 20.